We begin with the raw amino-acid sequence, 378 residues long: Odorant receptor 45a (378 aa).

The Cytoplasmic segment spans residues 1–30 (MDASYFAVQRRALEIVGFDPSTPQLSLKHP). A helical membrane pass occupies residues 31-51 (IWAGILILSLISHNWPMVVYA). The Extracellular portion of the chain corresponds to 52 to 129 (LQDLSDLTRL…RYVARSFRNA (78 aa)). A helical transmembrane segment spans residues 130 to 150 (AYGVICASAIAPMLLGLWGYV). At 151–173 (ETGVFTPTTPMEFNFWLDERKPH) the chain is on the cytoplasmic side. Residues 174–194 (FYWPIYVWGVLGVAAAAWLAI) form a helical membrane-spanning segment. Residues 195-197 (ATD) are Extracellular-facing. Residues 198–218 (TLFSWLTHNVVIQFQLLELVL) form a helical membrane-spanning segment. At 219–249 (EEKDLNGGDSRLTGFVSRHRIALDLAKELSS) the chain is on the cytoplasmic side. Residues 250–270 (IFGEIVFVKYMLSYLQLCMLA) traverse the membrane as a helical segment. At 271-285 (FRFSRSGWSAQVPFR) the chain is on the extracellular side. A helical membrane pass occupies residues 286 to 306 (ATFLVAIIIQLSSYCYGGEYI). The Cytoplasmic portion of the chain corresponds to 307-342 (KQQSLAIAQAVYGQINWPEMTPKKRRLWQMVIMRAQ). The chain crosses the membrane as a helical span at residues 343–363 (RPAKIFGFMFVVDLPLLLWVI). At 364–378 (RTAGSFLAMLRTFER) the chain is on the extracellular side.

The protein belongs to the insect chemoreceptor superfamily. Heteromeric odorant receptor channel (TC 1.A.69) family. Or1a subfamily. Interacts with Orco. Complexes exist early in the endomembrane system in olfactory sensory neurons (OSNs), coupling these complexes to the conserved ciliary trafficking pathway.

The protein resides in the cell membrane. Functionally, odorant receptor which mediates acceptance or avoidance behavior, depending on its substrates. The odorant receptor repertoire encodes a large collection of odor stimuli that vary widely in identity, intensity, and duration. May form a complex with Orco to form odorant-sensing units, providing sensitive and prolonged odorant signaling and calcium permeability. Involved in the behavioral responses to hexanol, pentyl acetate, benzyl acetate, and 2-heptanone. The sequence is that of Odorant receptor 45a (Or45a) from Drosophila melanogaster (Fruit fly).